A 248-amino-acid polypeptide reads, in one-letter code: ATP synthase subunit a, chloroplastic (248 aa).

5 helical membrane passes run 38–58, 96–116, 135–155, 200–220, and 221–241; these read QVLITSWVVIAVLLGSATIAV, VPFIGTMFLFILVSNWSGALL, INTTVALALLTSVAYFYAGLA, LVVAVLVSLVPLVVPIPVMFL, and GLFTSAIQALIFATLAAAYIG.

Belongs to the ATPase A chain family. F-type ATPases have 2 components, CF(1) - the catalytic core - and CF(0) - the membrane proton channel. CF(1) has five subunits: alpha(3), beta(3), gamma(1), delta(1), epsilon(1). CF(0) has four main subunits: a, b, b' and c.

Its subcellular location is the plastid. The protein localises to the chloroplast thylakoid membrane. Its function is as follows. Key component of the proton channel; it plays a direct role in the translocation of protons across the membrane. The polypeptide is ATP synthase subunit a, chloroplastic (Cycas taitungensis (Prince sago)).